The following is a 626-amino-acid chain: Glycosyltransferase 25 family member (626 aa).

An N-terminal signal peptide occupies residues 1 to 21 (MLKKQVFYGILLICAFVCIYG). 4 N-linked (GlcNAc...) asparagine glycosylation sites follow: asparagine 113, asparagine 234, asparagine 272, and asparagine 533. A Prevents secretion from ER motif is present at residues 623–626 (HQEL).

This sequence belongs to the glycosyltransferase 25 family.

It localises to the endoplasmic reticulum lumen. The chain is Glycosyltransferase 25 family member from Drosophila pseudoobscura pseudoobscura (Fruit fly).